A 264-amino-acid chain; its full sequence is MPDKKRRVTDFVKGGGPYVWVTAYDYPTAKLVDEAGVDGILVGDSLGMVVLGLPNTLGVTLADMVRHTQAVARAAPKALVVADMPFMTYETGPRDALRNAARLIRAGAEAVKLEGGSEYAHVVEKLVKAGIPVMGHIGLNPQRVLALGGFKMVGKTEEQKKKLVEDAKALRDVGVFAIVVEFVPASVAKEVTQSVDVPTICIGAGPHCDGQILVLHDVVGLSERTPSFAKRYANVAEQILSAVRQYVQEVRTKAFPAKEHYRDV.

Residues Asp-44 and Asp-83 each contribute to the Mg(2+) site. 3-methyl-2-oxobutanoate is bound by residues 44–45 (DS), Asp-83, and Lys-112. Glu-114 is a binding site for Mg(2+). Glu-181 functions as the Proton acceptor in the catalytic mechanism.

It belongs to the PanB family. Homodecamer; pentamer of dimers. The cofactor is Mg(2+).

The protein localises to the cytoplasm. It carries out the reaction 3-methyl-2-oxobutanoate + (6R)-5,10-methylene-5,6,7,8-tetrahydrofolate + H2O = 2-dehydropantoate + (6S)-5,6,7,8-tetrahydrofolate. It functions in the pathway cofactor biosynthesis; coenzyme A biosynthesis. Functionally, catalyzes the reversible reaction in which hydroxymethyl group from 5,10-methylenetetrahydrofolate is transferred onto alpha-ketoisovalerate to form ketopantoate. The protein is 3-methyl-2-oxobutanoate hydroxymethyltransferase of Pyrobaculum arsenaticum (strain DSM 13514 / JCM 11321 / PZ6).